The primary structure comprises 194 residues: MHLNKMKKVSLKTYLVLFFLIFFIFCSFWFIKPKEKKLKLEKLRYEEVIKKINAKNNQNLKSVENFITENKNIYGTLSSLFLAKKYILDKNLDKALIQLNNSLKYTKEENLQNILKIRIAKIKIQQNKNQDAIKILEEIKDNSWKNIVENMKGDIFMKNKEIKKAILAWKKSKYLEKSNASKEIINMKINEIKR.

At 1–10 (MHLNKMKKVS) the chain is on the cytoplasmic side. The helical transmembrane segment at 11 to 31 (LKTYLVLFFLIFFIFCSFWFI) threads the bilayer. Residues 32-194 (KPKEKKLKLE…INMKINEIKR (163 aa)) are Periplasmic-facing.

The protein belongs to the YfgM family. Interacts with the SecYEG translocon. Forms a complex with PpiD.

It localises to the cell inner membrane. Functionally, may mediate protein transfer from the SecYEG translocon to the periplasmic chaperone network via its periplasmic C-terminal region. In Buchnera aphidicola subsp. Schizaphis graminum (strain Sg), this protein is Ancillary SecYEG translocon subunit.